Reading from the N-terminus, the 158-residue chain is Transcription elongation factor GreA (158 aa).

A coiled-coil region spans residues 53 to 75 (AKERQGQVEATIGDLEDKLSRAQ).

The protein belongs to the GreA/GreB family.

Necessary for efficient RNA polymerase transcription elongation past template-encoded arresting sites. The arresting sites in DNA have the property of trapping a certain fraction of elongating RNA polymerases that pass through, resulting in locked ternary complexes. Cleavage of the nascent transcript by cleavage factors such as GreA or GreB allows the resumption of elongation from the new 3'terminus. GreA releases sequences of 2 to 3 nucleotides. The chain is Transcription elongation factor GreA from Sphingopyxis alaskensis (strain DSM 13593 / LMG 18877 / RB2256) (Sphingomonas alaskensis).